The sequence spans 267 residues: DNA repair protein RecO (267 aa).

Belongs to the RecO family.

Functionally, involved in DNA repair and RecF pathway recombination. This Prochlorococcus marinus (strain MIT 9313) protein is DNA repair protein RecO.